We begin with the raw amino-acid sequence, 293 residues long: MLRIKHFDANEKLQILYAKQLCERFSIQTFKNKFTGSESLVTLTSVCGDWVIRIDTLSFLKKKYEVFSGFSTQESLLHLSKCVFIESSSVFSIPELSDKITFRITNEIQYATTGSHLCCFSSSLGIIYFDKMPVLRNQVSLDLLHHLLEFCLGSSNVRLATLKRIRTGDIIIVQKLYNLLLCNQVIIGDYIVNDNNEAKINLSESNGESEHTEVSLALFNYDDINVKVDFILLEKNMTINELKMYVENELFKFPDDIVKHVNIKVNGSLVGHGELVSIEDGYGIEISSWMVKE.

This sequence belongs to the FliN/MopA/SpaO family.

Functionally, required for surface presentation of invasion plasmid antigens. Could play a role in preserving the translocation competence of the Ipa antigens. Required for invasion and for secretion of the three Ipa proteins. In Shigella flexneri, this protein is Surface presentation of antigens protein SpaO (spaO).